The following is a 154-amino-acid chain: Superoxide dismutase [Cu-Zn] (154 aa).

3 residues coordinate Cu cation: histidine 47, histidine 49, and histidine 64. A disulfide bridge connects residues cysteine 58 and cysteine 147. Histidine 64, histidine 72, histidine 81, and aspartate 84 together coordinate Zn(2+). Histidine 121 is a Cu cation binding site. Residues 125–136 are compositionally biased toward basic and acidic residues; the sequence is DDLGKGGNEESL. Residues 125–144 are disordered; it reads DDLGKGGNEESLKTGNAGPR. Position 144 (arginine 144) interacts with substrate.

It belongs to the Cu-Zn superoxide dismutase family. In terms of assembly, homodimer. It depends on Cu cation as a cofactor. Zn(2+) is required as a cofactor.

The protein localises to the cytoplasm. The catalysed reaction is 2 superoxide + 2 H(+) = H2O2 + O2. Functionally, destroys radicals which are normally produced within the cells and which are toxic to biological systems. In Neurospora crassa (strain ATCC 24698 / 74-OR23-1A / CBS 708.71 / DSM 1257 / FGSC 987), this protein is Superoxide dismutase [Cu-Zn] (sod-1).